We begin with the raw amino-acid sequence, 823 residues long: DNA topoisomerase 4 subunit A (823 aa).

The Topo IIA-type catalytic domain occupies leucine 30–leucine 496. Tyrosine 118 acts as the O-(5'-phospho-DNA)-tyrosine intermediate in catalysis.

This sequence belongs to the type II topoisomerase GyrA/ParC subunit family. ParC type 2 subfamily. As to quaternary structure, heterotetramer composed of ParC and ParE.

Its subcellular location is the cell membrane. The catalysed reaction is ATP-dependent breakage, passage and rejoining of double-stranded DNA.. Inhibited by quinolones, such as levofloxacin. Its function is as follows. Topoisomerase IV is essential for chromosome segregation. It relaxes supercoiled DNA. Performs the decatenation events required during the replication of a circular DNA molecule. The chain is DNA topoisomerase 4 subunit A from Streptococcus pneumoniae serotype 4 (strain ATCC BAA-334 / TIGR4).